The primary structure comprises 322 residues: Peroxisomal adenine nucleotide carrier 1 (322 aa).

Solcar repeat units lie at residues 5–94, 104–184, and 202–298; these read LESV…FKRV, IGTK…LKQH, and LSAF…ITAT. A run of 6 helical transmembrane segments spans residues 8 to 28, 104 to 124, 158 to 178, 201 to 221, 254 to 274, and 286 to 306; these read VSEA…LYPL, IGTK…SVLI, FDGL…YTVF, VLSA…ATVL, IPGV…FKGL, and ALLL…ILAI.

Belongs to the mitochondrial carrier (TC 2.A.29) family. As to expression, expressed in stamens, pollen grains, seeds, leaves, cotyledons, roots, stems, flowers, hypocotyls and siliques.

The protein localises to the peroxisome membrane. Peroxisomal adenine nucleotide transporter catalyzing the counterexchange of ATP with AMP. ATP is needed by reactions that generate acyl-CoA for peroxisomal fatty acid beta-oxidation during postgerminative growth. Required for the beta-oxidation reactions involved in auxin biosynthesis and for the conversion of seed-reserved triacylglycerols into sucrose that is necessary for growth before the onset of photosynthesis. In Arabidopsis thaliana (Mouse-ear cress), this protein is Peroxisomal adenine nucleotide carrier 1 (PNC1).